We begin with the raw amino-acid sequence, 510 residues long: 2,3-bisphosphoglycerate-independent phosphoglycerate mutase (510 aa).

Asp-15 and Ser-65 together coordinate Mn(2+). Ser-65 (phosphoserine intermediate) is an active-site residue. Substrate-binding positions include His-126, 155–156 (RD), Arg-187, Arg-193, 259–262 (RPDR), and Lys-332. 5 residues coordinate Mn(2+): Asp-399, His-403, Asp-440, His-441, and His-458.

Belongs to the BPG-independent phosphoglycerate mutase family. Mn(2+) is required as a cofactor.

It is found in the plastid. It localises to the chloroplast. The catalysed reaction is (2R)-2-phosphoglycerate = (2R)-3-phosphoglycerate. It participates in carbohydrate degradation; glycolysis; pyruvate from D-glyceraldehyde 3-phosphate: step 3/5. Functionally, catalyzes the interconversion of 2-phosphoglycerate and 3-phosphoglycerate. The polypeptide is 2,3-bisphosphoglycerate-independent phosphoglycerate mutase (Antithamnion sp. (Red alga)).